A 324-amino-acid chain; its full sequence is tRNA-dihydrouridine(20a/20b) synthase [NAD(P)+]-like (324 aa).

Residues 33–35 (PMV) and Q87 each bind FMN. The active-site Proton donor is the C116. Residues K158, H186, 216–218 (NGD), and 240–241 (AR) contribute to the FMN site.

The protein belongs to the Dus family. Dus4 subfamily. It depends on FMN as a cofactor.

The catalysed reaction is 5,6-dihydrouridine(20a) in tRNA + NADP(+) = uridine(20a) in tRNA + NADPH + H(+). It catalyses the reaction 5,6-dihydrouridine(20a) in tRNA + NAD(+) = uridine(20a) in tRNA + NADH + H(+). It carries out the reaction 5,6-dihydrouridine(20b) in tRNA + NAD(+) = uridine(20b) in tRNA + NADH + H(+). The enzyme catalyses 5,6-dihydrouridine(20b) in tRNA + NADP(+) = uridine(20b) in tRNA + NADPH + H(+). Catalyzes the synthesis of dihydrouridine, a modified base found in the D-loop of most tRNAs. This is tRNA-dihydrouridine(20a/20b) synthase [NAD(P)+]-like (Dus4l) from Mus musculus (Mouse).